A 421-amino-acid polypeptide reads, in one-letter code: uncharacterized protein (421 aa).

Position 249 is an N6-(pyridoxal phosphate)lysine (K249).

This sequence belongs to the class-I pyridoxal-phosphate-dependent aminotransferase family. The cofactor is pyridoxal 5'-phosphate.

Its subcellular location is the cytoplasm. This is an uncharacterized protein from Schizosaccharomyces pombe (strain 972 / ATCC 24843) (Fission yeast).